Reading from the N-terminus, the 390-residue chain is Transposase for insertion sequence element IS256 in transposon Tn4001 (390 aa).

The protein belongs to the transposase mutator family.

In terms of biological role, required for the transposition of the insertion element. The polypeptide is Transposase for insertion sequence element IS256 in transposon Tn4001 (Enterococcus faecalis (strain ATCC 700802 / V583)).